We begin with the raw amino-acid sequence, 114 residues long: Fumarate reductase subunit D (114 aa).

Helical transmembrane passes span 24–44 (ISAL…PLGI), 49–69 (GIIA…LTIF), and 94–114 (LIFY…VASI).

The protein belongs to the FrdD family. Part of an enzyme complex containing four subunits: a flavoprotein (FrdA), an iron-sulfur protein (FrdB), and two hydrophobic anchor proteins (FrdC and FrdD).

The protein resides in the cell inner membrane. Its function is as follows. Anchors the catalytic components of the fumarate reductase complex to the cell membrane, binds quinones. In Actinobacillus succinogenes (strain ATCC 55618 / DSM 22257 / CCUG 43843 / 130Z), this protein is Fumarate reductase subunit D.